The sequence spans 264 residues: Thymidylate synthase (264 aa).

Residue Arg21 coordinates dUMP. His51 serves as a coordination point for (6R)-5,10-methylene-5,6,7,8-tetrahydrofolate. Residue 126–127 participates in dUMP binding; that stretch reads RR. Cys146 acts as the Nucleophile in catalysis. DUMP contacts are provided by residues 166 to 169, Asn177, and 207 to 209; these read RSAD and HLY. Asp169 contacts (6R)-5,10-methylene-5,6,7,8-tetrahydrofolate. Ala263 is a binding site for (6R)-5,10-methylene-5,6,7,8-tetrahydrofolate.

It belongs to the thymidylate synthase family. Bacterial-type ThyA subfamily. Homodimer.

It is found in the cytoplasm. It catalyses the reaction dUMP + (6R)-5,10-methylene-5,6,7,8-tetrahydrofolate = 7,8-dihydrofolate + dTMP. The protein operates within pyrimidine metabolism; dTTP biosynthesis. Functionally, catalyzes the reductive methylation of 2'-deoxyuridine-5'-monophosphate (dUMP) to 2'-deoxythymidine-5'-monophosphate (dTMP) while utilizing 5,10-methylenetetrahydrofolate (mTHF) as the methyl donor and reductant in the reaction, yielding dihydrofolate (DHF) as a by-product. This enzymatic reaction provides an intracellular de novo source of dTMP, an essential precursor for DNA biosynthesis. This chain is Thymidylate synthase, found in Stutzerimonas stutzeri (strain A1501) (Pseudomonas stutzeri).